The sequence spans 126 residues: Histone H2B 3 (126 aa).

Low complexity predominate over residues 1–12 (MPEPAKSAPAPK). Residues 1–34 (MPEPAKSAPAPKKGSKKAVTKTQKKGDKKRRKTR) form a disordered region. N6-acetyllysine occurs at positions 6 and 13. Residues 13-34 (KGSKKAVTKTQKKGDKKRRKTR) are compositionally biased toward basic residues. Ser15 is subject to Phosphoserine. Residues Lys16 and Lys21 each carry the N6-acetyllysine modification. A glycan (O-linked (GlcNAc) serine) is linked at Ser113. Residue Lys121 forms a Glycyl lysine isopeptide (Lys-Gly) (interchain with G-Cter in ubiquitin) linkage.

The protein belongs to the histone H2B family. In terms of assembly, the nucleosome is a histone octamer containing two molecules each of H2A, H2B, H3 and H4 assembled in one H3-H4 heterotetramer and two H2A-H2B heterodimers. The octamer wraps approximately 147 bp of DNA. Post-translationally, monoubiquitination of Lys-121 by the BRE1 gives a specific tag for epigenetic transcriptional activation and is also prerequisite for histone H3 'Lys-4' and 'Lys-79' methylation. In terms of processing, phosphorylated on Ser-15 during apoptosis; which facilitates apoptotic chromatin condensation. GlcNAcylation at Ser-113 promotes monoubiquitination of Lys-121. It fluctuates in response to extracellular glucose, and associates with transcribed genes.

Its subcellular location is the nucleus. The protein resides in the chromosome. In terms of biological role, core component of nucleosome. Nucleosomes wrap and compact DNA into chromatin, limiting DNA accessibility to the cellular machineries which require DNA as a template. Histones thereby play a central role in transcription regulation, DNA repair, DNA replication and chromosomal stability. DNA accessibility is regulated via a complex set of post-translational modifications of histones, also called histone code, and nucleosome remodeling. This chain is Histone H2B 3 (hist2h2l), found in Danio rerio (Zebrafish).